The sequence spans 92 residues: uncharacterized protein (92 aa).

A helical transmembrane segment spans residues 65–86; the sequence is AVWIFWLCFLVSGLSRAFLVYF.

It is found in the membrane. This is an uncharacterized protein from Treponema pallidum (strain Nichols).